The primary structure comprises 240 residues: Ubiquitin domain-containing protein 1 (240 aa).

The disordered stretch occupies residues 1 to 48 (MGGCVGRPQGESQRSQSRASGQQRKRAGRNEPLKKERPRWKSDYPMTD). Residues 12–22 (SQRSQSRASGQ) are compositionally biased toward low complexity. The span at 28 to 42 (GRNEPLKKERPRWKS) shows a compositional bias: basic and acidic residues. The Ubiquitin-like domain maps to 153-228 (FQLKVRLSTG…DTSYCKPATR (76 aa)).

Functionally, may be involved in the regulation of cellular senescence through a positive feedback loop with TP53. This Xenopus tropicalis (Western clawed frog) protein is Ubiquitin domain-containing protein 1 (ubtd1).